The sequence spans 475 residues: Ribulose bisphosphate carboxylase large chain (475 aa).

Positions 1–2 are excised as a propeptide; sequence MS. Position 3 is an N-acetylproline (P3). K14 bears the N6,N6,N6-trimethyllysine mark. Substrate contacts are provided by N123 and T173. The Proton acceptor role is filled by K175. K177 is a binding site for substrate. K201, D203, and E204 together coordinate Mg(2+). N6-carboxylysine is present on K201. H294 functions as the Proton acceptor in the catalytic mechanism. Residues R295, H327, and S379 each contribute to the substrate site.

It belongs to the RuBisCO large chain family. Type I subfamily. In terms of assembly, heterohexadecamer of 8 large chains and 8 small chains; disulfide-linked. The disulfide link is formed within the large subunit homodimers. Requires Mg(2+) as cofactor. In terms of processing, the disulfide bond which can form in the large chain dimeric partners within the hexadecamer appears to be associated with oxidative stress and protein turnover.

It localises to the plastid. The protein resides in the chloroplast. It catalyses the reaction 2 (2R)-3-phosphoglycerate + 2 H(+) = D-ribulose 1,5-bisphosphate + CO2 + H2O. It carries out the reaction D-ribulose 1,5-bisphosphate + O2 = 2-phosphoglycolate + (2R)-3-phosphoglycerate + 2 H(+). Functionally, ruBisCO catalyzes two reactions: the carboxylation of D-ribulose 1,5-bisphosphate, the primary event in carbon dioxide fixation, as well as the oxidative fragmentation of the pentose substrate in the photorespiration process. Both reactions occur simultaneously and in competition at the same active site. This is Ribulose bisphosphate carboxylase large chain from Psilotum nudum (Whisk fern).